Consider the following 208-residue polypeptide: Large ribosomal subunit protein uL3 (208 aa).

Residues 116–148 are disordered; it reads GFQGVIKRHGQSRGPMAHGSRYHRRPGSMGPVA.

The protein belongs to the universal ribosomal protein uL3 family. As to quaternary structure, part of the 50S ribosomal subunit. Forms a cluster with proteins L14 and L19.

In terms of biological role, one of the primary rRNA binding proteins, it binds directly near the 3'-end of the 23S rRNA, where it nucleates assembly of the 50S subunit. The sequence is that of Large ribosomal subunit protein uL3 from Streptococcus pyogenes serotype M6 (strain ATCC BAA-946 / MGAS10394).